The sequence spans 442 residues: MSNISTPQPRIGFVSLGCPKNLVDSERILTELRTEGYQVVPRYDDAELVIVNTCGFIDSAVQESLEAIGEALNENGKVIVTGCLGAKENQIREVHPKVLEITGPHSYEQVLSHVHQYVPKPTHNPFTSLVPEQGVKLTPRHYAYLKISEGCNHRCTFCIIPSMRGDLDSRPIGSVLDEAKRLVNAGVKELLVISQDTSAYGADVKQRTGFWNGQPVKTSMVSLCEQLASLGVWVRLHYVYPYPHVDDVIPLMAEGKILPYLDIPLQHASPKILKLMKRPGAVERTLERIKRWREICPDLTLRSTFIVGFPGETEEDFQMLLDFLKEAKLDRVGCFKFSPVEGAAANELPDQVPEEVKEERFHRFMQLQQAISTQRLQDKIGREVLVLIDEIDEEGAIGRSMADAPEIDGAVYLNGETGVKVGDIVKVKVEHADEYDLWGSRV.

The region spanning 9–119 is the MTTase N-terminal domain; sequence PRIGFVSLGC…VLSHVHQYVP (111 aa). C18, C54, C83, C151, C155, and C158 together coordinate [4Fe-4S] cluster. Residues 137-375 form the Radical SAM core domain; the sequence is LTPRHYAYLK…QLQQAISTQR (239 aa). Residues 377-442 form the TRAM domain; sequence QDKIGREVLV…DEYDLWGSRV (66 aa).

The protein belongs to the methylthiotransferase family. RimO subfamily. [4Fe-4S] cluster serves as cofactor.

The protein localises to the cytoplasm. It carries out the reaction L-aspartate(89)-[ribosomal protein uS12]-hydrogen + (sulfur carrier)-SH + AH2 + 2 S-adenosyl-L-methionine = 3-methylsulfanyl-L-aspartate(89)-[ribosomal protein uS12]-hydrogen + (sulfur carrier)-H + 5'-deoxyadenosine + L-methionine + A + S-adenosyl-L-homocysteine + 2 H(+). In terms of biological role, catalyzes the methylthiolation of an aspartic acid residue of ribosomal protein uS12. The sequence is that of Ribosomal protein uS12 methylthiotransferase RimO from Pectobacterium atrosepticum (strain SCRI 1043 / ATCC BAA-672) (Erwinia carotovora subsp. atroseptica).